Consider the following 125-residue polypeptide: PEP-dependent dihydroxyacetone kinase 2, phosphoryl donor subunit DhaM (125 aa).

One can recognise a PTS EIIA type-4 domain in the interval 1 to 125 (MISIVLVSHS…AILQELTNVH (125 aa)). The active-site Tele-phosphohistidine intermediate is the histidine 9.

Belongs to the PEP-utilizing enzyme family. As to quaternary structure, homodimer. The dihydroxyacetone kinase complex is composed of a homodimer of DhaM, a homodimer of DhaK and the subunit DhaL.

It localises to the cytoplasm. It catalyses the reaction dihydroxyacetone + phosphoenolpyruvate = dihydroxyacetone phosphate + pyruvate. Functionally, component of the dihydroxyacetone kinase complex, which is responsible for the phosphoenolpyruvate (PEP)-dependent phosphorylation of dihydroxyacetone. DhaM serves as the phosphoryl donor. Is phosphorylated by phosphoenolpyruvate in an EI- and HPr-dependent reaction, and a phosphorelay system on histidine residues finally leads to phosphoryl transfer to DhaL and dihydroxyacetone. The protein is PEP-dependent dihydroxyacetone kinase 2, phosphoryl donor subunit DhaM of Listeria innocua serovar 6a (strain ATCC BAA-680 / CLIP 11262).